The primary structure comprises 212 residues: Pyrrolidone-carboxylate peptidase (212 aa).

Active-site residues include glutamate 80, cysteine 143, and histidine 165.

This sequence belongs to the peptidase C15 family. In terms of assembly, homotetramer.

Its subcellular location is the cytoplasm. The catalysed reaction is Release of an N-terminal pyroglutamyl group from a polypeptide, the second amino acid generally not being Pro.. In terms of biological role, removes 5-oxoproline from various penultimate amino acid residues except L-proline. The sequence is that of Pyrrolidone-carboxylate peptidase from Vibrio parahaemolyticus serotype O3:K6 (strain RIMD 2210633).